The primary structure comprises 126 residues: Small ribosomal subunit protein uS13c (126 aa).

The tract at residues 97–126 (PLRGQRTRTNARTRRGGKKTVAGKKKAPRK) is disordered. A compositionally biased stretch (basic residues) spans 101-126 (QRTRTNARTRRGGKKTVAGKKKAPRK).

It belongs to the universal ribosomal protein uS13 family. Part of the 30S ribosomal subunit.

It is found in the plastid. Its subcellular location is the chloroplast. Located at the top of the head of the 30S subunit, it contacts several helices of the 16S rRNA. The sequence is that of Small ribosomal subunit protein uS13c from Porphyra purpurea (Red seaweed).